Consider the following 162-residue polypeptide: Protein-export protein SecB (162 aa).

Belongs to the SecB family. Homotetramer, a dimer of dimers. One homotetramer interacts with 1 SecA dimer.

It localises to the cytoplasm. One of the proteins required for the normal export of preproteins out of the cell cytoplasm. It is a molecular chaperone that binds to a subset of precursor proteins, maintaining them in a translocation-competent state. It also specifically binds to its receptor SecA. This chain is Protein-export protein SecB, found in Pseudomonas savastanoi pv. phaseolicola (strain 1448A / Race 6) (Pseudomonas syringae pv. phaseolicola (strain 1448A / Race 6)).